Here is a 258-residue protein sequence, read N- to C-terminus: Tryptophan synthase alpha chain (258 aa).

Catalysis depends on proton acceptor residues Glu52 and Asp63.

It belongs to the TrpA family. As to quaternary structure, tetramer of two alpha and two beta chains.

The enzyme catalyses (1S,2R)-1-C-(indol-3-yl)glycerol 3-phosphate + L-serine = D-glyceraldehyde 3-phosphate + L-tryptophan + H2O. The protein operates within amino-acid biosynthesis; L-tryptophan biosynthesis; L-tryptophan from chorismate: step 5/5. In terms of biological role, the alpha subunit is responsible for the aldol cleavage of indoleglycerol phosphate to indole and glyceraldehyde 3-phosphate. In Streptococcus pneumoniae (strain ATCC 700669 / Spain 23F-1), this protein is Tryptophan synthase alpha chain.